A 297-amino-acid chain; its full sequence is Phosphoribosylaminoimidazole-succinocarboxamide synthase (297 aa).

Belongs to the SAICAR synthetase family.

The catalysed reaction is 5-amino-1-(5-phospho-D-ribosyl)imidazole-4-carboxylate + L-aspartate + ATP = (2S)-2-[5-amino-1-(5-phospho-beta-D-ribosyl)imidazole-4-carboxamido]succinate + ADP + phosphate + 2 H(+). It functions in the pathway purine metabolism; IMP biosynthesis via de novo pathway; 5-amino-1-(5-phospho-D-ribosyl)imidazole-4-carboxamide from 5-amino-1-(5-phospho-D-ribosyl)imidazole-4-carboxylate: step 1/2. The protein is Phosphoribosylaminoimidazole-succinocarboxamide synthase of Mycobacterium marinum (strain ATCC BAA-535 / M).